A 169-amino-acid polypeptide reads, in one-letter code: CKLF-like MARVEL transmembrane domain-containing protein 1 (169 aa).

Residues 17–135 (NLKQPETAAA…DAFVVTTKMR (119 aa)) enclose the MARVEL domain. A run of 4 helical transmembrane segments spans residues 22 to 42 (ETAA…ITQA), 46 to 66 (FITI…IYVL), 79 to 99 (LLDL…AILA), and 110 to 130 (YVGG…AFVV).

This sequence belongs to the chemokine-like factor family. In terms of tissue distribution, highly expressed in testis.

It localises to the membrane. In Homo sapiens (Human), this protein is CKLF-like MARVEL transmembrane domain-containing protein 1 (CMTM1).